Consider the following 375-residue polypeptide: MEEEFVVTPWEVRGRVDYEKLLKHFGAKPLTKDEVALLEKYAGEVHPLIRRGFFYAHRDFDFIMKWHGEGRPWALYTGRGPSGPVHIGHMVPWILLKWFSDKFGLEVYFQITDDEKFYDDPEMKLEEATNWAYENALDVIALGFSPERLHLIIDTKDIKPLYPIAVRVAKKLTWNTVKATFGFTDSTNIGLIFYPSLQIAVAFLPTELRREATPVLIPCAIDQDPYFRLARDIADALGYPKPSTLYSKFIMALTGESKMSASNPDSAIYTLDDEKTVRRKVMNAFTGGRPTAEEQRKYGGNPEVCPVFHYHMLFDPDDASVEKIRQDCKSGALLCGECKLKLHEKITKFLKEHRERREKARGKVDEYRLSVKLSK.

Residues 81–89 carry the 'HIGH' region motif; the sequence is PSGPVHIGH. Positions 258–262 match the 'KMSKS' region motif; the sequence is KMSAS.

The protein belongs to the class-I aminoacyl-tRNA synthetase family.

Its subcellular location is the cytoplasm. The enzyme catalyses tRNA(Trp) + L-tryptophan + ATP = L-tryptophyl-tRNA(Trp) + AMP + diphosphate + H(+). In Pyrobaculum aerophilum (strain ATCC 51768 / DSM 7523 / JCM 9630 / CIP 104966 / NBRC 100827 / IM2), this protein is Tryptophan--tRNA ligase.